A 517-amino-acid chain; its full sequence is MTTNIHAQRILILDFGSQYTQLVARRIREIGVYCELWSWDVEESDIRDFNPDGIILSGGPESVTEANSPRAPQYVFDSGVPVFGVCYGMQTMAEQLGGKVATSTEREFGYAAVQVTGESALFKDLEATQDVWMSHGDKVVEIPSDFVKIAETETCPYAAMANEEKKYYGVQFHPEVTHTKNGLKMLENFVLNVCGCEGLWTSASIIEDAIARIKEQVGDDEVILGLSGGVDSSVVAMLAHRAIGDKLTCVFVDNGLLRLNEAEQVMEMFSEGFGLKIIHVEAEERFLSALSGESDPEAKRKIIGHVFVDIFDEESKKLSNAKWLAQGTIYPDVIESAASKTGKAHVIKSHHNVGGLPDDMEMGLVEPLRELFKDEVRKIGLELGLPYNMLYRHPFPGPGLGVRVLGEVKKEYCDLLRRADAIFIEELHNADLYNKVSQAFTVFLPVRSVGVMGDGRKYDWVVSLRAVETIDFMTAHWAHLPYDFLGKVSNRIINEVGGISRVVYDISGKPPATIEWE.

The region spanning 9 to 199 (RILILDFGSQ…VLNVCGCEGL (191 aa)) is the Glutamine amidotransferase type-1 domain. Cys86 (nucleophile) is an active-site residue. Catalysis depends on residues His173 and Glu175. One can recognise a GMPS ATP-PPase domain in the interval 200–392 (WTSASIIEDA…LGLPYNMLYR (193 aa)). Position 227–233 (227–233 (SGGVDSS)) interacts with ATP.

As to quaternary structure, homodimer.

The catalysed reaction is XMP + L-glutamine + ATP + H2O = GMP + L-glutamate + AMP + diphosphate + 2 H(+). It participates in purine metabolism; GMP biosynthesis; GMP from XMP (L-Gln route): step 1/1. Catalyzes the synthesis of GMP from XMP. This chain is GMP synthase [glutamine-hydrolyzing], found in Aliivibrio salmonicida (strain LFI1238) (Vibrio salmonicida (strain LFI1238)).